A 57-amino-acid chain; its full sequence is Large ribosomal subunit protein bL32 (57 aa).

It belongs to the bacterial ribosomal protein bL32 family.

This Shouchella clausii (strain KSM-K16) (Alkalihalobacillus clausii) protein is Large ribosomal subunit protein bL32.